A 236-amino-acid polypeptide reads, in one-letter code: MEADVQRAQQAQLEKGSSVPPWTGIPLQKGLGQRLRQHVNPLQAQYQQPTPPPHWERVYRRLGQPLHLDIGSGSGRFLLRMAQEQPDWNFLGVEIRQPLVERANAWRDELGLDNVHFLFANINVSLRHLFAPGDLSRVTIQFPDPWFKKRHHKRRIVQPRLVADLALLLQPGSPVFLQSDVREVAEEMVDRFLEHPQFWNPYQGPIDDNPFGIPTEREWQCLQLGLPIYRYWLERR.

The tract at residues 1–23 (MEADVQRAQQAQLEKGSSVPPWT) is disordered. S-adenosyl-L-methionine is bound by residues D69, E94, N121, and D144. D144 is a catalytic residue. Substrate-binding residues include K148 and D180.

It belongs to the class I-like SAM-binding methyltransferase superfamily. TrmB family.

It carries out the reaction guanosine(46) in tRNA + S-adenosyl-L-methionine = N(7)-methylguanosine(46) in tRNA + S-adenosyl-L-homocysteine. Its pathway is tRNA modification; N(7)-methylguanine-tRNA biosynthesis. In terms of biological role, catalyzes the formation of N(7)-methylguanine at position 46 (m7G46) in tRNA. The protein is tRNA (guanine-N(7)-)-methyltransferase of Synechococcus sp. (strain JA-3-3Ab) (Cyanobacteria bacterium Yellowstone A-Prime).